The chain runs to 120 residues: Large ribosomal subunit protein bL20 (120 aa).

It belongs to the bacterial ribosomal protein bL20 family.

In terms of biological role, binds directly to 23S ribosomal RNA and is necessary for the in vitro assembly process of the 50S ribosomal subunit. It is not involved in the protein synthesizing functions of that subunit. This is Large ribosomal subunit protein bL20 from Novosphingobium aromaticivorans (strain ATCC 700278 / DSM 12444 / CCUG 56034 / CIP 105152 / NBRC 16084 / F199).